The sequence spans 490 residues: Probable glycine dehydrogenase (decarboxylating) subunit 2 (490 aa).

The residue at position 273 (K273) is an N6-(pyridoxal phosphate)lysine.

It belongs to the GcvP family. C-terminal subunit subfamily. As to quaternary structure, the glycine cleavage system is composed of four proteins: P, T, L and H. In this organism, the P 'protein' is a heterodimer of two subunits. It depends on pyridoxal 5'-phosphate as a cofactor.

It carries out the reaction N(6)-[(R)-lipoyl]-L-lysyl-[glycine-cleavage complex H protein] + glycine + H(+) = N(6)-[(R)-S(8)-aminomethyldihydrolipoyl]-L-lysyl-[glycine-cleavage complex H protein] + CO2. Its function is as follows. The glycine cleavage system catalyzes the degradation of glycine. The P protein binds the alpha-amino group of glycine through its pyridoxal phosphate cofactor; CO(2) is released and the remaining methylamine moiety is then transferred to the lipoamide cofactor of the H protein. The sequence is that of Probable glycine dehydrogenase (decarboxylating) subunit 2 from Staphylococcus aureus (strain MSSA476).